The primary structure comprises 172 residues: MSQKLLPISPLQLLFLQCLLIGFTAAYPYLIFPASPSSGDSRRLVKRAFDRFDNSGVFSFGAKRFDRYDDETAYGYGFDNHIFKRSADPYRFMSVPTKKAFDRMDNSDFFGAKRKRSFDRMGGTEFGLMKRSAPESREQLINNLAESIITLRRAREAESSPESQRTIITYDD.

Positions 1–26 are cleaved as a signal peptide; that stretch reads MSQKLLPISPLQLLFLQCLLIGFTAA.

In terms of processing, may be processed by convertase egl-3.

It localises to the secreted. In terms of biological role, neuropeptide-like protein. Plays a role in behaviors associated with a sleep-like state induced by stress (SIS), acting in concert with the FARP (FMRFamide related) peptides, flp-13 and flp-24. This is Neuropeptide-like protein nlp-8 from Caenorhabditis elegans.